The sequence spans 88 residues: Alpha-latrotoxin associated low molecular weight protein 2 (88 aa).

Residues 1–19 (MLKLICIAFLVTVLTLVAG) form the signal peptide. Disulfide bonds link cysteine 30/cysteine 66, cysteine 46/cysteine 62, and cysteine 49/cysteine 75.

It belongs to the arthropod CHH/MIH/GIH/VIH hormone family. As to expression, expressed by the venom gland.

The protein localises to the secreted. In terms of biological role, may increase the toxicity of alpha-latrotoxin and/or other venom components. Is non-toxic to mice and to the cockroach Periplaneta americana. The protein is Alpha-latrotoxin associated low molecular weight protein 2 of Latrodectus hesperus (Western black widow spider).